Here is a 259-residue protein sequence, read N- to C-terminus: uncharacterized protein (259 aa).

The ABC transporter domain occupies 4–248 (LQTTNLSKTY…SILDTLSVLG (245 aa)). Residue 42 to 49 (GPSGSGKT) coordinates ATP.

The protein belongs to the ABC transporter superfamily.

This is an uncharacterized protein from Bacillus subtilis (strain 168).